A 136-amino-acid chain; its full sequence is Nucleoside diphosphate kinase (136 aa).

The ATP site is built by lysine 10, phenylalanine 58, arginine 86, threonine 92, arginine 104, and asparagine 114. Histidine 117 acts as the Pros-phosphohistidine intermediate in catalysis.

It belongs to the NDK family. In terms of assembly, homotetramer. It depends on Mg(2+) as a cofactor.

Its subcellular location is the cytoplasm. The catalysed reaction is a 2'-deoxyribonucleoside 5'-diphosphate + ATP = a 2'-deoxyribonucleoside 5'-triphosphate + ADP. The enzyme catalyses a ribonucleoside 5'-diphosphate + ATP = a ribonucleoside 5'-triphosphate + ADP. Its function is as follows. Major role in the synthesis of nucleoside triphosphates other than ATP. The ATP gamma phosphate is transferred to the NDP beta phosphate via a ping-pong mechanism, using a phosphorylated active-site intermediate. The polypeptide is Nucleoside diphosphate kinase (Mycobacteroides abscessus (strain ATCC 19977 / DSM 44196 / CCUG 20993 / CIP 104536 / JCM 13569 / NCTC 13031 / TMC 1543 / L948) (Mycobacterium abscessus)).